The chain runs to 150 residues: Meiotic expression up-regulated protein 15 (150 aa).

The chain is Meiotic expression up-regulated protein 15 (meu15) from Schizosaccharomyces pombe (strain 972 / ATCC 24843) (Fission yeast).